The chain runs to 84 residues: Hydramacin-1 (84 aa).

An N-terminal signal peptide occupies residues 1 to 24 (MRTVVFFILVSIFLVALKPTGTQA). Q25 is subject to Pyrrolidone carboxylic acid. Intrachain disulfides connect C29/C72, C36/C65, C51/C81, and C55/C83.

As to expression, expressed in the endodermal epithelium.

The protein resides in the secreted. It is found in the target cell membrane. In terms of biological role, cationic antimicrobial peptide potently active against Gram-positive and Gram-negative bacteria including multi-resistant human pathogenic strains. Is not active against the Gram-positive Coccus species, Gram-negative non-fermentation species and against the fungus C.albicans. It leads to aggregation of bacteria as an initial step of its bactericidal mechanism. Aggregated cells are connected via electron-dense contacts and adopt a thorn apple-like morphology. Hydramycin contains a belt of positively charged residues that separate two hydrophobic areas. This structure may explain the observed aggregation of bacteria, since each of these areas can immerse into the outer leaflets of the membranes of two individual bacteria. Is able to permeabilize membranes of viable bacteria at low and neutral pH values, but no pore-forming activity is not detected. The protein is Hydramacin-1 of Hydra vulgaris (Hydra).